We begin with the raw amino-acid sequence, 456 residues long: tRNA (guanine(37)-N(1))-methyltransferase (456 aa).

S-adenosyl-L-methionine-binding positions include H246, 284–285 (DL), 310–311 (DG), and N336.

Belongs to the class I-like SAM-binding methyltransferase superfamily. TRM5/TYW2 family. Monomer.

The protein localises to the mitochondrion matrix. The protein resides in the nucleus. It is found in the cytoplasm. The catalysed reaction is guanosine(37) in tRNA + S-adenosyl-L-methionine = N(1)-methylguanosine(37) in tRNA + S-adenosyl-L-homocysteine + H(+). Functionally, specifically methylates the N1 position of guanosine-37 in various cytoplasmic and mitochondrial tRNAs. Methylation is not dependent on the nature of the nucleoside 5' of the target nucleoside. This is the first step in the biosynthesis of wybutosine (yW), a modified base adjacent to the anticodon of tRNAs and required for accurate decoding. The sequence is that of tRNA (guanine(37)-N(1))-methyltransferase from Ciona intestinalis (Transparent sea squirt).